The chain runs to 239 residues: MKNKRSQNSPYVTPDNPYLTLEKALGYSFKDKRLLEQALTHKSCKLALNNERLEFLGDAVLGLVIGELLYHKFYQYDEGKLSKLRASIVSAHGFTKLAKAIALQDYLRVSSSEEISKGREKPSILSSAFEALMAGVYLEAGLAKVRKIIQNLLNRAYKRLDLEHLFMDYKTALQELTQAQFCVIPTYQLLQEKGPDHHKEFEMALYIQDKMYATAKGKSKKEAEQQCAYQALQKLKEAK.

The region spanning 18–141 is the RNase III domain; sequence YLTLEKALGY…LMAGVYLEAG (124 aa). E54 is a binding site for Mg(2+). The active site involves D58. Positions 127 and 130 each coordinate Mg(2+). E130 is an active-site residue. In terms of domain architecture, DRBM spans 168–237; that stretch reads DYKTALQELT…AYQALQKLKE (70 aa).

The protein belongs to the ribonuclease III family. Homodimer. Mg(2+) is required as a cofactor.

It localises to the cytoplasm. It catalyses the reaction Endonucleolytic cleavage to 5'-phosphomonoester.. Digests double-stranded RNA. Involved in the processing of primary rRNA transcript to yield the immediate precursors to the large and small rRNAs (23S and 16S). Processes some mRNAs, and tRNAs when they are encoded in the rRNA operon. Processes pre-crRNA and tracrRNA of type II CRISPR loci if present in the organism. This Helicobacter pylori (strain J99 / ATCC 700824) (Campylobacter pylori J99) protein is Ribonuclease 3.